The following is a 248-amino-acid chain: Probable transcriptional regulatory protein trd_1132 (248 aa).

Belongs to the TACO1 family.

Its subcellular location is the cytoplasm. The chain is Probable transcriptional regulatory protein trd_1132 from Thermomicrobium roseum (strain ATCC 27502 / DSM 5159 / P-2).